The sequence spans 261 residues: Maspardin (261 aa).

In terms of domain architecture, AB hydrolase-1 spans 87 to 159; sequence FCDGFRKLLD…NSFWLMPAFM (73 aa). Ser257 carries the post-translational modification Phosphoserine.

Belongs to the AB hydrolase superfamily. In terms of assembly, interacts with CD4. Interacts with ALDH16A1.

Its subcellular location is the cytoplasm. Its function is as follows. May play a role as a negative regulatory factor in CD4-dependent T-cell activation. The sequence is that of Maspardin (Spg21) from Rattus norvegicus (Rat).